Here is a 247-residue protein sequence, read N- to C-terminus: Pyrroloquinoline-quinone synthase (247 aa).

Belongs to the PqqC family.

The enzyme catalyses 6-(2-amino-2-carboxyethyl)-7,8-dioxo-1,2,3,4,7,8-hexahydroquinoline-2,4-dicarboxylate + 3 O2 = pyrroloquinoline quinone + 2 H2O2 + 2 H2O + H(+). It participates in cofactor biosynthesis; pyrroloquinoline quinone biosynthesis. Its function is as follows. Ring cyclization and eight-electron oxidation of 3a-(2-amino-2-carboxyethyl)-4,5-dioxo-4,5,6,7,8,9-hexahydroquinoline-7,9-dicarboxylic-acid to PQQ. This chain is Pyrroloquinoline-quinone synthase, found in Rhizobium rhizogenes (strain K84 / ATCC BAA-868) (Agrobacterium radiobacter).